The sequence spans 268 residues: Adenosylcobinamide-GDP ribazoletransferase (268 aa).

The next 6 membrane-spanning stretches (helical) occupy residues 54 to 74, 80 to 100, 124 to 144, 150 to 170, 202 to 222, and 243 to 263; these read IAGL…GVLW, AVVL…DGLS, IGVM…AFLA, WLTA…YGIV, ALAL…VWMV, and GALC…SAPM.

Belongs to the CobS family. Requires Mg(2+) as cofactor.

It localises to the cell membrane. It carries out the reaction alpha-ribazole + adenosylcob(III)inamide-GDP = adenosylcob(III)alamin + GMP + H(+). The enzyme catalyses alpha-ribazole 5'-phosphate + adenosylcob(III)inamide-GDP = adenosylcob(III)alamin 5'-phosphate + GMP + H(+). The protein operates within cofactor biosynthesis; adenosylcobalamin biosynthesis; adenosylcobalamin from cob(II)yrinate a,c-diamide: step 7/7. Its function is as follows. Joins adenosylcobinamide-GDP and alpha-ribazole to generate adenosylcobalamin (Ado-cobalamin). Also synthesizes adenosylcobalamin 5'-phosphate from adenosylcobinamide-GDP and alpha-ribazole 5'-phosphate. The chain is Adenosylcobinamide-GDP ribazoletransferase from Roseiflexus sp. (strain RS-1).